Here is a 258-residue protein sequence, read N- to C-terminus: ER membrane protein complex subunit 3 (258 aa).

Helical transmembrane passes span Pro-8–Leu-28, Val-123–Leu-143, and Ser-173–Gly-193.

This sequence belongs to the EMC3 family.

Its subcellular location is the cytoplasm. The protein localises to the membrane. This is ER membrane protein complex subunit 3 from Schizosaccharomyces pombe (strain 972 / ATCC 24843) (Fission yeast).